The primary structure comprises 170 residues: Zinc finger matrin-type protein 5 (170 aa).

The C3H1-type zinc-finger motif lies at 51-79 (EQNKRPCRKFLLTGQCDFGSNCRFSHMSE). The segment at 150–170 (PPSLRAPPPGGWPLQPSVQWG) is disordered.

Component of the U11/U12 snRNPs that are part of the U12-type spliceosome.

The protein localises to the nucleus. The chain is Zinc finger matrin-type protein 5 (ZMAT5) from Bos taurus (Bovine).